The sequence spans 509 residues: Maturase K (509 aa).

Belongs to the intron maturase 2 family. MatK subfamily.

It localises to the plastid. It is found in the chloroplast. Functionally, usually encoded in the trnK tRNA gene intron. Probably assists in splicing its own and other chloroplast group II introns. This Vachellia farnesiana (Sweet acacia) protein is Maturase K.